We begin with the raw amino-acid sequence, 305 residues long: Glycine--tRNA ligase alpha subunit (305 aa).

This sequence belongs to the class-II aminoacyl-tRNA synthetase family. Tetramer of two alpha and two beta subunits.

The protein resides in the cytoplasm. It carries out the reaction tRNA(Gly) + glycine + ATP = glycyl-tRNA(Gly) + AMP + diphosphate. The sequence is that of Glycine--tRNA ligase alpha subunit from Heliobacterium modesticaldum (strain ATCC 51547 / Ice1).